The chain runs to 121 residues: Small ribosomal subunit protein uS13 (121 aa).

The segment at 94–121 is disordered; that stretch reads GLPLRGQRTRTNARTRKGPRRAAQSLKK.

This sequence belongs to the universal ribosomal protein uS13 family. As to quaternary structure, part of the 30S ribosomal subunit. Forms a loose heterodimer with protein S19. Forms two bridges to the 50S subunit in the 70S ribosome.

In terms of biological role, located at the top of the head of the 30S subunit, it contacts several helices of the 16S rRNA. In the 70S ribosome it contacts the 23S rRNA (bridge B1a) and protein L5 of the 50S subunit (bridge B1b), connecting the 2 subunits; these bridges are implicated in subunit movement. Contacts the tRNAs in the A and P-sites. In Paraburkholderia phytofirmans (strain DSM 17436 / LMG 22146 / PsJN) (Burkholderia phytofirmans), this protein is Small ribosomal subunit protein uS13.